The chain runs to 459 residues: Putrescine aminotransferase (459 aa).

Pyridoxal 5'-phosphate-binding positions include 150–151 (GT) and Q274. K300 is subject to N6-(pyridoxal phosphate)lysine. T332 is a pyridoxal 5'-phosphate binding site.

Belongs to the class-III pyridoxal-phosphate-dependent aminotransferase family. Putrescine aminotransferase subfamily. Pyridoxal 5'-phosphate serves as cofactor.

The enzyme catalyses an alkane-alpha,omega-diamine + 2-oxoglutarate = an omega-aminoaldehyde + L-glutamate. The catalysed reaction is putrescine + 2-oxoglutarate = 1-pyrroline + L-glutamate + H2O. It catalyses the reaction cadaverine + 2-oxoglutarate = 5-aminopentanal + L-glutamate. The protein operates within amine and polyamine degradation; putrescine degradation; 4-aminobutanal from putrescine (transaminase route): step 1/1. Its function is as follows. Catalyzes the aminotransferase reaction from putrescine to 2-oxoglutarate, leading to glutamate and 4-aminobutanal, which spontaneously cyclizes to form 1-pyrroline. This is the first step in one of two pathways for putrescine degradation, where putrescine is converted into 4-aminobutanoate (gamma-aminobutyrate or GABA) via 4-aminobutanal. Also functions as a cadaverine transaminase in a a L-lysine degradation pathway to succinate that proceeds via cadaverine, glutarate and L-2-hydroxyglutarate. This Enterobacter sp. (strain 638) protein is Putrescine aminotransferase.